The chain runs to 217 residues: Thiamine-phosphate synthase (217 aa).

4-amino-2-methyl-5-(diphosphooxymethyl)pyrimidine contacts are provided by residues 37-41 (QFREK) and Asn-72. The Mg(2+) site is built by Asp-73 and Asp-92. Ser-110 is a binding site for 4-amino-2-methyl-5-(diphosphooxymethyl)pyrimidine. 136–138 (TVS) lines the 2-[(2R,5Z)-2-carboxy-4-methylthiazol-5(2H)-ylidene]ethyl phosphate pocket. Lys-139 lines the 4-amino-2-methyl-5-(diphosphooxymethyl)pyrimidine pocket. 2-[(2R,5Z)-2-carboxy-4-methylthiazol-5(2H)-ylidene]ethyl phosphate-binding positions include Gly-168 and 188–189 (IS).

The protein belongs to the thiamine-phosphate synthase family. Mg(2+) serves as cofactor.

It carries out the reaction 2-[(2R,5Z)-2-carboxy-4-methylthiazol-5(2H)-ylidene]ethyl phosphate + 4-amino-2-methyl-5-(diphosphooxymethyl)pyrimidine + 2 H(+) = thiamine phosphate + CO2 + diphosphate. It catalyses the reaction 2-(2-carboxy-4-methylthiazol-5-yl)ethyl phosphate + 4-amino-2-methyl-5-(diphosphooxymethyl)pyrimidine + 2 H(+) = thiamine phosphate + CO2 + diphosphate. The catalysed reaction is 4-methyl-5-(2-phosphooxyethyl)-thiazole + 4-amino-2-methyl-5-(diphosphooxymethyl)pyrimidine + H(+) = thiamine phosphate + diphosphate. It participates in cofactor biosynthesis; thiamine diphosphate biosynthesis; thiamine phosphate from 4-amino-2-methyl-5-diphosphomethylpyrimidine and 4-methyl-5-(2-phosphoethyl)-thiazole: step 1/1. Its function is as follows. Condenses 4-methyl-5-(beta-hydroxyethyl)thiazole monophosphate (THZ-P) and 2-methyl-4-amino-5-hydroxymethyl pyrimidine pyrophosphate (HMP-PP) to form thiamine monophosphate (TMP). This is Thiamine-phosphate synthase from Anoxybacillus flavithermus (strain DSM 21510 / WK1).